The chain runs to 160 residues: Cell cycle regulator of non-homologous end joining (160 aa).

Position 1 is an N-acetylmethionine (Met1). A KBM motif is present at residues 1–21 (METLKSDNKKRVLPSWMTAPG). A disordered region spans residues 78-152 (KPWEQPSLVA…EGKEEEDELK (75 aa)). The segment covering 99–109 (ESPHTSSPGSS) has biased composition (low complexity). An XLM motif is present at residues 150–160 (ELKYVREIFFS).

As to quaternary structure, interacts (via KBM motif) with XRCC5/Ku80 and XRCC6/Ku70 heterodimer. Interacts (via XLF motif) with TRIM28/KAP1, ATM, MRE11, NBN and RAD50. Interacts with splicing factor SF3B1. Interacts with ERCC6L2; this interaction is DNA independent.

The protein resides in the cytoplasm. The protein localises to the nucleus. It localises to the chromosome. Functionally, cell-cycle-specific regulator of classical non-homologous end joining (NHEJ) of DNA double-strand break (DSB) repair, which can act both as an activator or inhibitor of NHEJ, depending on the cell cycle phase. Acts as a regulator of DNA repair pathway choice by specifically inhibiting classical NHEJ during the S and G2 phases, thereby promoting error-free repair by homologous recombination during cell cycle phases when sister chromatids are present. Preferentially protects single-stranded overhangs at break sites by inhibiting classical NHEJ, thereby creating a local environment that favors homologous recombination. Acts via interaction with XRCC5/Ku80 and XRCC6/Ku70. In contrast, acts as an activator of NHEJ during G1 phase of the cell cycle: promotes classical NHEJ in G1 phase cells via multivalent interactions that increase the affinity of DNA damage response proteins for DSB-associated chromatin. Also involved in immunoglobulin V(D)J recombination. May also act as an indirect regulator of proteasome. The protein is Cell cycle regulator of non-homologous end joining of Rattus norvegicus (Rat).